A 185-amino-acid chain; its full sequence is V-type ATP synthase subunit E (185 aa).

The protein belongs to the V-ATPase E subunit family.

In terms of biological role, produces ATP from ADP in the presence of a proton gradient across the membrane. This is V-type ATP synthase subunit E from Deinococcus geothermalis (strain DSM 11300 / CIP 105573 / AG-3a).